The following is a 503-amino-acid chain: Probable cytosol aminopeptidase (503 aa).

Mn(2+) contacts are provided by Lys-274 and Asp-279. Lys-286 is an active-site residue. Mn(2+) is bound by residues Asp-297, Asp-356, and Glu-358. Arg-360 is a catalytic residue.

The protein belongs to the peptidase M17 family. It depends on Mn(2+) as a cofactor.

The protein resides in the cytoplasm. It carries out the reaction Release of an N-terminal amino acid, Xaa-|-Yaa-, in which Xaa is preferably Leu, but may be other amino acids including Pro although not Arg or Lys, and Yaa may be Pro. Amino acid amides and methyl esters are also readily hydrolyzed, but rates on arylamides are exceedingly low.. The enzyme catalyses Release of an N-terminal amino acid, preferentially leucine, but not glutamic or aspartic acids.. Presumably involved in the processing and regular turnover of intracellular proteins. Catalyzes the removal of unsubstituted N-terminal amino acids from various peptides. The sequence is that of Probable cytosol aminopeptidase from Burkholderia ambifaria (strain ATCC BAA-244 / DSM 16087 / CCUG 44356 / LMG 19182 / AMMD) (Burkholderia cepacia (strain AMMD)).